A 189-amino-acid polypeptide reads, in one-letter code: CDP-archaeol synthase (189 aa).

The next 5 membrane-spanning stretches (helical) occupy residues 6–26, 71–91, 96–116, 125–145, and 162–184; these read VAIA…AVLA, GVVL…TVGV, IAAA…ASFL, GAAF…ALTA, and VAIF…AFGL.

Belongs to the CDP-archaeol synthase family. Requires Mg(2+) as cofactor.

The protein resides in the cell membrane. It catalyses the reaction 2,3-bis-O-(geranylgeranyl)-sn-glycerol 1-phosphate + CTP + H(+) = CDP-2,3-bis-O-(geranylgeranyl)-sn-glycerol + diphosphate. It participates in membrane lipid metabolism; glycerophospholipid metabolism. Functionally, catalyzes the formation of CDP-2,3-bis-(O-geranylgeranyl)-sn-glycerol (CDP-archaeol) from 2,3-bis-(O-geranylgeranyl)-sn-glycerol 1-phosphate (DGGGP) and CTP. This reaction is the third ether-bond-formation step in the biosynthesis of archaeal membrane lipids. In Natronomonas pharaonis (strain ATCC 35678 / DSM 2160 / CIP 103997 / JCM 8858 / NBRC 14720 / NCIMB 2260 / Gabara) (Halobacterium pharaonis), this protein is CDP-archaeol synthase.